We begin with the raw amino-acid sequence, 253 residues long: Triosephosphate isomerase (253 aa).

9–11 contributes to the substrate binding site; the sequence is NWK. Catalysis depends on H97, which acts as the Electrophile. E169 serves as the catalytic Proton acceptor. Residues G175, S215, and 236-237 each bind substrate; that span reads GG.

This sequence belongs to the triosephosphate isomerase family. Homodimer.

The protein localises to the cytoplasm. The catalysed reaction is D-glyceraldehyde 3-phosphate = dihydroxyacetone phosphate. The protein operates within carbohydrate biosynthesis; gluconeogenesis. Its pathway is carbohydrate degradation; glycolysis; D-glyceraldehyde 3-phosphate from glycerone phosphate: step 1/1. Functionally, involved in the gluconeogenesis. Catalyzes stereospecifically the conversion of dihydroxyacetone phosphate (DHAP) to D-glyceraldehyde-3-phosphate (G3P). This is Triosephosphate isomerase from Staphylococcus epidermidis (strain ATCC 35984 / DSM 28319 / BCRC 17069 / CCUG 31568 / BM 3577 / RP62A).